Consider the following 146-residue polypeptide: CysO-cysteine peptidase (146 aa).

The MPN domain maps to 11–134; it reads LVIRADLVNA…LRSYRIVDGA (124 aa). Residues His88, His90, and Asp101 each coordinate Zn(2+). Positions 88–101 match the JAMM motif motif; the sequence is HSHTATEAYPSRTD.

The protein belongs to the peptidase M67A family. The cofactor is Zn(2+).

It catalyses the reaction [CysO sulfur-carrier protein]-Gly-NH-CH2-C(O)-S-L-Cys + H2O = [CysO sulfur-carrier protein]-C-terminal Gly-Gly + L-cysteine + H(+). The protein operates within amino-acid biosynthesis; L-cysteine biosynthesis. Its function is as follows. Protease that hydrolyzes the covalent CysO-cysteine adduct synthesized by CysM to release L-cysteine and regenerate CysO. The polypeptide is CysO-cysteine peptidase (mec) (Mycobacterium bovis (strain ATCC BAA-935 / AF2122/97)).